The chain runs to 261 residues: 2,3-dihydro-2,3-dihydroxybenzoate dehydrogenase (261 aa).

Residue 12–36 coordinates NAD(+); that stretch reads FITGAAQGIGEAVARTLASQGAHIA. Residue S144 participates in substrate binding. The active-site Proton acceptor is Y157.

This sequence belongs to the short-chain dehydrogenases/reductases (SDR) family.

It localises to the cytoplasm. The enzyme catalyses (2S,3S)-2,3-dihydroxy-2,3-dihydrobenzoate + NAD(+) = 2,3-dihydroxybenzoate + NADH + H(+). It participates in siderophore biosynthesis; bacillibactin biosynthesis. This Bacillus subtilis (strain 168) protein is 2,3-dihydro-2,3-dihydroxybenzoate dehydrogenase (dhbA).